Reading from the N-terminus, the 285-residue chain is MTATLIDGNALSKTLRAQAAERAAALAARGHQPGLAVILVGDNPASEVYVRNKIKACEDNGFFSLKDRYPATLSEPELLARIDELNRDPKIHGILVQLPLPAHIDSHKVIEAIAPEKDVDGFHVANAGALLTGKPLFRPCTPYGVMKMFEAYKIPLQGANAVVIGRSNIVGKPMALLLLEAGATVTICHSKTRELAAHTRAADIVVAAVGKRNVLTADMVKPGATVIDVGMNRNDEGKLCGDVDFAGVSQVAGHITPVPGGVGPMTITMLLVNTIEAAERAAAAA.

NADP(+) contacts are provided by residues 165–167 (GRS) and Ser190.

It belongs to the tetrahydrofolate dehydrogenase/cyclohydrolase family. In terms of assembly, homodimer.

The catalysed reaction is (6R)-5,10-methylene-5,6,7,8-tetrahydrofolate + NADP(+) = (6R)-5,10-methenyltetrahydrofolate + NADPH. It catalyses the reaction (6R)-5,10-methenyltetrahydrofolate + H2O = (6R)-10-formyltetrahydrofolate + H(+). The protein operates within one-carbon metabolism; tetrahydrofolate interconversion. Catalyzes the oxidation of 5,10-methylenetetrahydrofolate to 5,10-methenyltetrahydrofolate and then the hydrolysis of 5,10-methenyltetrahydrofolate to 10-formyltetrahydrofolate. The protein is Bifunctional protein FolD of Burkholderia pseudomallei (strain 1106a).